Reading from the N-terminus, the 208-residue chain is Uracil phosphoribosyltransferase (208 aa).

5-phospho-alpha-D-ribose 1-diphosphate-binding positions include arginine 78, arginine 103, and 130–138 (DPMLATGGS). Uracil contacts are provided by residues isoleucine 193 and 198 to 200 (GDA). A 5-phospho-alpha-D-ribose 1-diphosphate-binding site is contributed by aspartate 199.

This sequence belongs to the UPRTase family. Requires Mg(2+) as cofactor.

The enzyme catalyses UMP + diphosphate = 5-phospho-alpha-D-ribose 1-diphosphate + uracil. It functions in the pathway pyrimidine metabolism; UMP biosynthesis via salvage pathway; UMP from uracil: step 1/1. Allosterically activated by GTP. Its function is as follows. Catalyzes the conversion of uracil and 5-phospho-alpha-D-ribose 1-diphosphate (PRPP) to UMP and diphosphate. The protein is Uracil phosphoribosyltransferase of Histophilus somni (strain 129Pt) (Haemophilus somnus).